The sequence spans 504 residues: Terminase, large subunit (504 aa).

Residues 1–204 (MTRGERVIAF…LSIWIDDAVK (204 aa)) are ATPase activity. Positions 54–61 (IARKNGKT) match the Walker A motif motif. Residues 149 to 154 (LAILDE) carry the Walker B motif motif. The segment at 326-415 (FPFFWTPQKT…LPLVEFGQGF (90 aa)) is nuclease activity. Asp471 serves as a coordination point for Mg(2+).

Belongs to the Hendrixvirinae large terminase family. As to quaternary structure, homopentamer; forms a ring-like structure through which genomic DNA is translocated into the capsid. Interacts with the terminase small subunit; the active complex is composed of a pentamer ring of terminase large subunits and a nonamer ring of terminase small subunits. Interacts with the portal protein; this interaction allows the packaging of viral DNA. The cofactor is Mg(2+). Mn(2+) serves as cofactor.

Inhibited by zinc. Functionally, the terminase large subunit acts as an ATP driven molecular motor necessary for viral DNA translocation into empty capsids and as an endonuclease that cuts the viral genome from the concetamer to initiate and to end a packaging reaction. The terminase lies at a unique vertex of the procapsid and is composed of two subunits, a small terminase subunit involved in viral DNA recognition (packaging sequence), and a large terminase subunit possessing endonucleolytic and ATPase activities. Both terminase subunits heterooligomerize and are docked on the portal protein to form the packaging machine. Packaging initiates by TerS recognizing the packaging sequence in the viral DNA. The nuclease activity of TerL cuts the viral DNA and the terminase-DNA complex binds to the portal of a procapsid shell. DNA is translocated into the capsid, powered by the packaging ATPase in TerL, which continues until the next site is encountered at which point the motor stops and again cuts the DNA to release the nucleocapsid filled with a unit-length genome ('unit length' packaging). The polypeptide is Terminase, large subunit (2) (Escherichia coli (Bacteriophage HK97)).